Here is a 1391-residue protein sequence, read N- to C-terminus: CAP-Gly domain-containing linker protein 1 (1391 aa).

Residues 1 to 53 (MSMLKPSGLKAPTKILKPGSTALKTPAAAAAPVEKTIPSEKASGPPSSETQEE) are disordered. Phosphoserine is present on Ser48. Thr50 bears the Phosphothreonine mark. Residues 78–120 (GETQFAPGQWAGIVLDEPIGKNDGSVAGVRYFQCEPLKGIFTR) enclose the CAP-Gly 1 domain. An important for tubulin binding region spans residues 97–101 (GKNDG). The segment at 129–182 (QAEDEANGLQAAPGRTASPLSTAAATMVSSSPATPSNIPHKPSQSTAKEPSATP) is disordered. At Ser146 the chain carries Phosphoserine. The segment covering 146-182 (SPLSTAAATMVSSSPATPSNIPHKPSQSTAKEPSATP) has biased composition (polar residues). Thr181 carries the phosphothreonine modification. Phosphoserine is present on residues Ser194, Ser196, Ser199, and Ser203. A CAP-Gly 2 domain is found at 231–273 (GETDFAKGEWCGVELDEPLGKNDGAVAGTRYFQCQPKYGLFAP). A compositionally biased stretch (low complexity) spans 302–331 (TPASLKRSPSASSLSSMSSVASSVSSKPSR). Residues 302–336 (TPASLKRSPSASSLSSMSSVASSVSSKPSRTGLLT) form a disordered region. Position 309 is a phosphoserine (Ser309). Ser311 is subject to Phosphoserine; by PKA. Phosphoserine occurs at positions 314, 347, and 1189. A coiled-coil region spans residues 349–1306 (TTALQEALKE…VEMMSEAALN (958 aa)). The disordered stretch occupies residues 1251–1272 (KRQLSSSSGNTDAQAEEDERAQ). A Phosphoserine modification is found at Ser1317. The CCHC-type zinc-finger motif lies at 1370 to 1387 (PYCEICEMFGHWATNCND).

In terms of assembly, interacts with MTOR; phosphorylates and regulates CLIP1. Interacts (via CAP-Gly domains) with tubulin. Interacts with SLAIN2. Interacts with TUBA1B, MAPRE1 and MAPRE3. Interacts (via zinc finger) with DCTN1. Binds preferentially to tyrosinated microtubules, and only marginally to detyrosinated microtubules. In terms of processing, phosphorylated. Phosphorylation induces conformational changes by increasing the affinity of the N-terminus for C-terminus, resulting in inhibition of its function thus decreasing its binding to microtubules and DCTN1. Exhibits a folded, autoinhibited conformation when phosphorylated and an open conformation when dephosphorylated with increased binding affinity to microtubules and DCTN1. Phosphorylation regulates its recruitment to tyrosinated microtubules and the recruitment of vesicular cargo to microtubules in neurons. Phosphorylation by MTOR may positively regulate CLIP1 association with microtubules. In terms of tissue distribution, expressed in the testes (at protein level).

The protein localises to the cytoplasm. It is found in the cytoskeleton. It localises to the cytoplasmic vesicle membrane. Its subcellular location is the cell projection. The protein resides in the ruffle. Its function is as follows. Binds to the plus end of microtubules and regulates the dynamics of the microtubule cytoskeleton. Promotes microtubule growth and microtubule bundling. Links cytoplasmic vesicles to microtubules and thereby plays an important role in intracellular vesicle trafficking. Plays a role macropinocytosis and endosome trafficking. The polypeptide is CAP-Gly domain-containing linker protein 1 (Clip1) (Mus musculus (Mouse)).